A 230-amino-acid polypeptide reads, in one-letter code: ATP-dependent dethiobiotin synthetase BioD (230 aa).

Residue 12 to 17 (DVGKTV) coordinates ATP. Threonine 16 is a binding site for Mg(2+). Residue lysine 37 is part of the active site. Threonine 41 serves as a coordination point for substrate. ATP-binding positions include aspartate 49, 108-111 (EGAG), 168-169 (GS), and 198-200 (PEG). Residues aspartate 49 and glutamate 108 each contribute to the Mg(2+) site.

This sequence belongs to the dethiobiotin synthetase family. In terms of assembly, homodimer. It depends on Mg(2+) as a cofactor.

It localises to the cytoplasm. The enzyme catalyses (7R,8S)-7,8-diammoniononanoate + CO2 + ATP = (4R,5S)-dethiobiotin + ADP + phosphate + 3 H(+). The protein operates within cofactor biosynthesis; biotin biosynthesis; biotin from 7,8-diaminononanoate: step 1/2. Its function is as follows. Catalyzes a mechanistically unusual reaction, the ATP-dependent insertion of CO2 between the N7 and N8 nitrogen atoms of 7,8-diaminopelargonic acid (DAPA, also called 7,8-diammoniononanoate) to form a ureido ring. The polypeptide is ATP-dependent dethiobiotin synthetase BioD (Corynebacterium kroppenstedtii (strain DSM 44385 / JCM 11950 / CIP 105744 / CCUG 35717)).